The sequence spans 484 residues: Sperm motility kinase 2B (484 aa).

Residues 8–256 (YVMLETIGHG…VAEVMVHPWV (249 aa)) form the Protein kinase domain. ATP contacts are provided by residues 14 to 22 (IGHGGCSKV) and lysine 37. Catalysis depends on aspartate 127, which acts as the Proton acceptor. The region spanning 272-314 (PLKPNPAIVKAMGYIGFQAQDIEDSLRQRKFNETMASYCLLKK) is the UBA domain. 2 stretches are compositionally biased toward polar residues: residues 356-373 (PTSL…CGRS) and 422-434 (SSDD…TSAS). Disordered regions lie at residues 356–400 (PTSL…TMDH) and 422–450 (SSDD…RGIK).

This sequence belongs to the protein kinase superfamily. CAMK Ser/Thr protein kinase family. Smok subfamily. In terms of tissue distribution, testis-specific. Expressed in the testis from 22 days postpartum (22 dpp).

It catalyses the reaction L-seryl-[protein] + ATP = O-phospho-L-seryl-[protein] + ADP + H(+). The catalysed reaction is L-threonyl-[protein] + ATP = O-phospho-L-threonyl-[protein] + ADP + H(+). May play a role in sperm motility, especially in the regulation of flagellar function. In Mus musculus (Mouse), this protein is Sperm motility kinase 2B.